The sequence spans 195 residues: 3-isopropylmalate dehydratase small subunit (195 aa).

Belongs to the LeuD family. LeuD type 1 subfamily. As to quaternary structure, heterodimer of LeuC and LeuD.

The catalysed reaction is (2R,3S)-3-isopropylmalate = (2S)-2-isopropylmalate. It participates in amino-acid biosynthesis; L-leucine biosynthesis; L-leucine from 3-methyl-2-oxobutanoate: step 2/4. Functionally, catalyzes the isomerization between 2-isopropylmalate and 3-isopropylmalate, via the formation of 2-isopropylmaleate. This Thermobifida fusca (strain YX) protein is 3-isopropylmalate dehydratase small subunit.